Here is a 483-residue protein sequence, read N- to C-terminus: Trimethylamine methyltransferase MttB (483 aa).

Position 334 (O334) is a non-standard amino acid, pyrrolysine.

Belongs to the trimethylamine methyltransferase family. As to quaternary structure, can form a complex with MttC.

It catalyses the reaction Co(I)-[trimethylamine-specific corrinoid protein] + trimethylamine + H(+) = methyl-Co(III)-[trimethylamine-specific corrinoid protein] + dimethylamine. The protein operates within one-carbon metabolism; methanogenesis from trimethylamine. In terms of biological role, catalyzes the transfer of a methyl group from trimethylamine to the corrinoid cofactor of MttC. This chain is Trimethylamine methyltransferase MttB (mttB), found in Methanosarcina thermophila.